Here is a 292-residue protein sequence, read N- to C-terminus: Tubulin beta chain (292 aa).

Positions 49 and 71 each coordinate GTP. The tract at residues serine 265–alanine 292 is disordered. A compositionally biased stretch (acidic residues) spans threonine 274–alanine 292.

It belongs to the tubulin family. In terms of assembly, dimer of alpha and beta chains. A typical microtubule is a hollow water-filled tube with an outer diameter of 25 nm and an inner diameter of 15 nM. Alpha-beta heterodimers associate head-to-tail to form protofilaments running lengthwise along the microtubule wall with the beta-tubulin subunit facing the microtubule plus end conferring a structural polarity. Microtubules usually have 13 protofilaments but different protofilament numbers can be found in some organisms and specialized cells. The cofactor is Mg(2+).

It is found in the cytoplasm. The protein localises to the cytoskeleton. In terms of biological role, tubulin is the major constituent of microtubules, a cylinder consisting of laterally associated linear protofilaments composed of alpha- and beta-tubulin heterodimers. Microtubules grow by the addition of GTP-tubulin dimers to the microtubule end, where a stabilizing cap forms. Below the cap, tubulin dimers are in GDP-bound state, owing to GTPase activity of alpha-tubulin. The polypeptide is Tubulin beta chain (Strongylocentrotus purpuratus (Purple sea urchin)).